Consider the following 322-residue polypeptide: Arginase-1 (322 aa).

Low complexity predominate over residues 1-12 (MSSKSKSIGIIG). Residues 1–26 (MSSKSKSIGIIGAPFSKGQPRGGVEE) form a disordered region. The residue at position 7 (serine 7) is a Phosphoserine. N6-succinyllysine is present on lysine 17. A Phosphoserine modification is found at serine 62. Histidine 101, aspartate 124, histidine 126, and aspartate 128 together coordinate Mn(2+). Residues 126–130 (HTDIN) and 137–139 (SGN) each bind substrate. Phosphoserine is present on serine 163. Aspartate 183 is a binding site for substrate. Positions 232 and 234 each coordinate Mn(2+). Substrate contacts are provided by threonine 246 and glutamate 277.

Belongs to the arginase family. Homotrimer. Interacts with CMTM6. Mn(2+) serves as cofactor.

It is found in the cytoplasm. The enzyme catalyses L-arginine + H2O = urea + L-ornithine. Its pathway is nitrogen metabolism; urea cycle; L-ornithine and urea from L-arginine: step 1/1. This Oryctolagus cuniculus (Rabbit) protein is Arginase-1 (ARG1).